A 637-amino-acid polypeptide reads, in one-letter code: Chaperone protein DnaK (637 aa).

Thr198 bears the Phosphothreonine; by autocatalysis mark. Low complexity predominate over residues Ala601 to Gly615. The segment at Ala601–Lys637 is disordered. The span at Asp623–Lys637 shows a compositional bias: acidic residues.

It belongs to the heat shock protein 70 family.

In terms of biological role, acts as a chaperone. In Vibrio atlanticus (strain LGP32) (Vibrio splendidus (strain Mel32)), this protein is Chaperone protein DnaK.